Reading from the N-terminus, the 1002-residue chain is Calcium-transporting ATPase sarcoplasmic/endoplasmic reticulum type (1002 aa).

The Cytoplasmic segment spans residues 1 to 48 (MEDGHSKTVEQSLNFFGTDGERGLTLDQIKTNQAKYGPNELPTEEGKS). Residues 49 to 69 (IWQLVLEQFDDLLVKILLLAA) traverse the membrane as a helical segment. At 70–89 (IISFVLALFEEHEETFTAFV) the chain is on the lumenal side. A helical membrane pass occupies residues 90–110 (EPLVILLILIANAVVGVWQER). The Cytoplasmic portion of the chain corresponds to 111-253 (NAESAIEALK…EIKTPLQQKL (143 aa)). The helical transmembrane segment at 254–273 (DEFGEQLSKVISVICVAVWA) threads the bilayer. At 274–295 (INIGHFNDPAHGGSWIKGAIYY) the chain is on the lumenal side. A helical membrane pass occupies residues 296 to 313 (FKIAVALAVAAIPEGLPA). Val-304, Ala-305, Ile-307, and Glu-309 together coordinate Ca(2+). At 314–757 (VITTCLALGT…EEGRAIYNNM (444 aa)) the chain is on the cytoplasmic side. Catalysis depends on Asp-351, which acts as the 4-aspartylphosphate intermediate. Mg(2+) is bound by residues Asp-703 and Asp-707. A helical transmembrane segment spans residues 758–777 (KQFIRYLISSNIGEVVSIFL). The Ca(2+) site is built by Asn-768 and Glu-771. The Lumenal segment spans residues 778-787 (TAALGLPEAL). The helical transmembrane segment at 788 to 808 (IPVQLLWVNLVTDGLPATALG) threads the bilayer. Residues Asn-796, Thr-799, and Asp-800 each coordinate Ca(2+). The Cytoplasmic portion of the chain corresponds to 809–828 (FNPPDLDIMDKPPRKADEGL). Residues 829–851 (ISGWLFFRYMAIGFYVGAATVGA) traverse the membrane as a helical segment. Residues 852–897 (AAWWFIASSEGPGLTYWQLTHHLSCLGGGDEFKGVDCKIFSDPKAM) are Lumenal-facing. The chain crosses the membrane as a helical span at residues 898–917 (TMALSVLVTIEMLNAMNSLS). Residue Glu-908 coordinates Ca(2+). The Cytoplasmic segment spans residues 918–930 (ENQSLISMPPWCN). The chain crosses the membrane as a helical span at residues 931 to 949 (LWLIGSMALSFTLHFVILY). Over 950–964 (VDVLSTVFQVTPLSA) the chain is Lumenal. The helical transmembrane segment at 965 to 985 (EEWITVMKFSIPVVLLDETLK) threads the bilayer. Residues 986-1002 (FVARKIADVPDAVVDKW) lie on the Cytoplasmic side of the membrane.

This sequence belongs to the cation transport ATPase (P-type) (TC 3.A.3) family.

Its subcellular location is the endoplasmic reticulum membrane. It localises to the sarcoplasmic reticulum membrane. The enzyme catalyses Ca(2+)(in) + ATP + H2O = Ca(2+)(out) + ADP + phosphate + H(+). In terms of biological role, this magnesium-dependent enzyme catalyzes the hydrolysis of ATP coupled with the transport of calcium. The chain is Calcium-transporting ATPase sarcoplasmic/endoplasmic reticulum type from Drosophila pseudoobscura pseudoobscura (Fruit fly).